A 206-amino-acid polypeptide reads, in one-letter code: Ras-related protein Rab-14 (206 aa).

15–22 (GDMGVGKS) is a GTP binding site. An Effector region motif is present at residues 37–45 (SPHTIGVEF). GTP-binding positions include 63 to 67 (DTAGQ) and 121 to 124 (NKKD). Residues 182-206 (PDGGITKNPPQTITDKPQDASKCSC) form a disordered region. Over residues 189 to 206 (NPPQTITDKPQDASKCSC) the composition is skewed to polar residues. S-geranylgeranyl cysteine attachment occurs at residues Cys-204 and Cys-206. Cysteine methyl ester is present on Cys-206.

This sequence belongs to the small GTPase superfamily. Rab family.

It is found in the endosome. The protein localises to the contractile vacuole. The protein resides in the membrane. The catalysed reaction is GTP + H2O = GDP + phosphate + H(+). Its activity is regulated as follows. Rab activation is generally mediated by a guanine exchange factor (GEF), while inactivation through hydrolysis of bound GTP is catalyzed by a GTPase activating protein (GAP). That Rab is activated by the DENND6A and DENND6B guanine exchange factors (GEF). In terms of biological role, the small GTPases Rab are key regulators of intracellular membrane trafficking, from the formation of transport vesicles to their fusion with membranes. Rabs cycle between an inactive GDP-bound form and an active GTP-bound form that is able to recruit to membranes different set of downstream effectors directly responsible for vesicle formation, movement, tethering and fusion. Regulates the fusion of phagosomes and lysosomes. This is Ras-related protein Rab-14 (rab14) from Dictyostelium discoideum (Social amoeba).